We begin with the raw amino-acid sequence, 67 residues long: Sperm protamine P1 (67 aa).

The disordered stretch occupies residues 1 to 67 (MASYRNSRSR…RRRKRNNENK (67 aa)). 2 stretches are compositionally biased toward basic residues: residues 7–25 (SRSRSRSRFRRRRGRRSRV) and 34–67 (RSSRRRRRGKGRAHSGKKGRRSGSRRRKRNNENK).

The protein belongs to the protamine P1 family. Testis.

It localises to the nucleus. Its subcellular location is the chromosome. Its function is as follows. Protamines substitute for histones in the chromatin of sperm during the haploid phase of spermatogenesis. They compact sperm DNA into a highly condensed, stable and inactive complex. The polypeptide is Sperm protamine P1 (PRM1) (Isoodon macrourus (Short-nosed bandicoot)).